Consider the following 334-residue polypeptide: Glycosylinositol phosphorylceramide mannosyl transferase 1 (334 aa).

The Cytoplasmic segment spans residues 1–26; the sequence is MGGGEVSKEMGACSLAYRRGDQKLRK. A helical; Signal-anchor for type II membrane protein transmembrane segment spans residues 27 to 49; sequence FVTARSTKFLLFCCIAFVLVTIV. Over 50–334 the chain is Lumenal; the sequence is CRSSRPWVNS…AVDSRNLWFW (285 aa). N58 carries an N-linked (GlcNAc...) asparagine glycan. Residues 145–150, 166–168, R196, and 258–262 each bind substrate; these read DSLNNR, DDD, and RNCED. D168 is a binding site for Mn(2+). Residues C260 and C305 are joined by a disulfide bond. D262 is a catalytic residue. N-linked (GlcNAc...) asparagine glycosylation occurs at N271. Substrate is bound by residues 289–302 and 292–302; these read STGI…TEKR and ISSIGGHTEKR.

Belongs to the glycosyltransferase 64 family. The cofactor is Mn(2+). As to expression, expressed in leaves, roots, stem, and flowers.

The protein resides in the golgi apparatus membrane. It functions in the pathway protein modification; protein glycosylation. The protein operates within sphingolipid metabolism. In terms of biological role, mannosyl transferase (ManT) required for the biosynthesis of mannose-carrying glycosylinositol phosphorylceramides (GIPCs). Maybe involved in cell-cell adhesion that maintains the integrity of organs by providing mechanical strength and facilitating the movement of metabolites throughout the plant during development. Prevents abscisic acid- (ABA-) mediated effects on development (e.g. cell size, flowering time, senescence). Probably implicated in beta-(1,4)-galactan biosynthesis thus being a cell-wall synthesis-related (CWSR) protein. The protein is Glycosylinositol phosphorylceramide mannosyl transferase 1 of Arabidopsis thaliana (Mouse-ear cress).